A 689-amino-acid polypeptide reads, in one-letter code: Glycine--tRNA ligase beta subunit (689 aa).

The protein belongs to the class-II aminoacyl-tRNA synthetase family. Tetramer of two alpha and two beta subunits.

It localises to the cytoplasm. The catalysed reaction is tRNA(Gly) + glycine + ATP = glycyl-tRNA(Gly) + AMP + diphosphate. The chain is Glycine--tRNA ligase beta subunit from Salmonella typhi.